A 101-amino-acid polypeptide reads, in one-letter code: MELKKQAQKGTIISEKFIEPENYRVILLNDDFTPMDFVVAVLISIFNKSQEEAETLMFKVHKTGQASVGIYVYDIATTKCFQVLTAAKNNNFPLQCKVEKV.

This sequence belongs to the ClpS family. In terms of assembly, binds to the N-terminal domain of the chaperone ClpA.

Its function is as follows. Involved in the modulation of the specificity of the ClpAP-mediated ATP-dependent protein degradation. The sequence is that of ATP-dependent Clp protease adapter protein ClpS from Treponema denticola (strain ATCC 35405 / DSM 14222 / CIP 103919 / JCM 8153 / KCTC 15104).